The chain runs to 588 residues: Putative calcium-binding mitochondrial carrier F55A11.4 (588 aa).

Over residues 1–14 (MINKNEQTESTSGA) the composition is skewed to polar residues. A disordered region spans residues 1–25 (MINKNEQTESTSGAAEQKEDDEEQY). EF-hand domains lie at 73 to 108 (EKER…ETPH), 109 to 139 (IPAN…SYVL), 140 to 175 (ENEQ…IGVP), and 176 to 211 (LDDH…YPSS). Asp-86, Asp-88, Asp-90, Thr-92, and Asp-97 together coordinate Ca(2+). The Ca(2+) site is built by Asp-153, Asn-155, Asp-157, and Glu-164. Solcar repeat units lie at residues 246–332 (GIWW…LKRL), 342–428 (ISTF…LKRT), and 440–529 (PGVL…VRTG). The next 6 membrane-spanning stretches (helical) occupy residues 252 to 269 (LVAG…TAPF), 307 to 326 (GNGI…FMCY), 352 to 365 (SAAG…IYPM), 403 to 422 (GYLP…LAIY), 446 to 463 (LACG…SYPF), and 504 to 523 (GITP…YVVY).

This sequence belongs to the mitochondrial carrier (TC 2.A.29) family. In terms of assembly, homodimer (via N-terminus).

The protein localises to the mitochondrion inner membrane. Its function is as follows. Mitochondrial and calcium-binding carrier that catalyzes the calcium-dependent exchange of cytoplasmic glutamate with mitochondrial aspartate across the mitochondrial inner membrane. In Caenorhabditis elegans, this protein is Putative calcium-binding mitochondrial carrier F55A11.4.